Here is a 575-residue protein sequence, read N- to C-terminus: uncharacterized protein (575 aa).

Residues 1–120 (MKLIEHYVAL…YNMWLSEVFG (120 aa)) enclose the HTH marR-type domain. A DNA-binding region (H-T-H motif) is located at residues 26–49 (LTEIADCLFCTERNAKLILHKLEN). The solute-binding region stretch occupies residues 176–490 (EPKPHLVHGW…FGFLHLLLSE (315 aa)).

This sequence in the C-terminal section; belongs to the bacterial solute-binding protein 5 family.

This is an uncharacterized protein from Bacillus subtilis (strain 168).